A 177-amino-acid polypeptide reads, in one-letter code: Putative peroxiredoxin (177 aa).

The Thioredoxin domain occupies 8–177 (TAKGNEIPDT…ASIDTILTKV (170 aa)). Cysteine 64 serves as the catalytic Cysteine sulfenic acid (-SOH) intermediate. Residues 175 to 177 (TKV) carry the Microbody targeting signal motif.

It belongs to the peroxiredoxin family. Prx5 subfamily. Homodimer; disulfide-linked, upon oxidation.

The enzyme catalyses a hydroperoxide + [thioredoxin]-dithiol = an alcohol + [thioredoxin]-disulfide + H2O. Its function is as follows. Thiol-specific peroxidase that catalyzes the reduction of hydrogen peroxide and organic hydroperoxides to water and alcohols, respectively. Plays a role in cell protection against oxidative stress by detoxifying peroxides and as sensor of hydrogen peroxide-mediated signaling events. The protein is Putative peroxiredoxin of Malassezia furfur (Pityriasis versicolor infection agent).